An 85-amino-acid polypeptide reads, in one-letter code: UPF0335 protein BARBAKC583_0130 (85 aa).

Belongs to the UPF0335 family.

This chain is UPF0335 protein BARBAKC583_0130, found in Bartonella bacilliformis (strain ATCC 35685 / KC583 / Herrer 020/F12,63).